We begin with the raw amino-acid sequence, 303 residues long: Recombination-associated protein RdgC (303 aa).

This sequence belongs to the RdgC family.

The protein localises to the cytoplasm. It localises to the nucleoid. Its function is as follows. May be involved in recombination. This is Recombination-associated protein RdgC from Enterobacter sp. (strain 638).